The sequence spans 333 residues: Phosphoribosylformylglycinamidine cyclo-ligase (333 aa).

The protein belongs to the AIR synthase family.

It is found in the cytoplasm. It carries out the reaction 2-formamido-N(1)-(5-O-phospho-beta-D-ribosyl)acetamidine + ATP = 5-amino-1-(5-phospho-beta-D-ribosyl)imidazole + ADP + phosphate + H(+). It participates in purine metabolism; IMP biosynthesis via de novo pathway; 5-amino-1-(5-phospho-D-ribosyl)imidazole from N(2)-formyl-N(1)-(5-phospho-D-ribosyl)glycinamide: step 2/2. In Methanococcoides burtonii (strain DSM 6242 / NBRC 107633 / OCM 468 / ACE-M), this protein is Phosphoribosylformylglycinamidine cyclo-ligase.